The primary structure comprises 287 residues: Cell division protein ZipA (287 aa).

Position 1 (M1) is a topological domain, periplasmic. The helical transmembrane segment at 2-22 (EIGLREWLIVIGIIVIAGILF) threads the bilayer. The Cytoplasmic segment spans residues 23–287 (DGWRRMRGSK…ERRALTQRRG (265 aa)). Residues 48-140 (DEEETTSAEV…PTQRITEDKD (93 aa)) are disordered. Composition is skewed to basic and acidic residues over residues 64–77 (LDTH…EHDL), 85–104 (REGK…KDEP), and 121–140 (GRDD…EDKD).

The protein belongs to the ZipA family. In terms of assembly, interacts with FtsZ via their C-terminal domains.

Its subcellular location is the cell inner membrane. Its function is as follows. Essential cell division protein that stabilizes the FtsZ protofilaments by cross-linking them and that serves as a cytoplasmic membrane anchor for the Z ring. Also required for the recruitment to the septal ring of downstream cell division proteins. This chain is Cell division protein ZipA, found in Pseudomonas syringae pv. syringae (strain B728a).